A 343-amino-acid polypeptide reads, in one-letter code: tRNA N6-adenosine threonylcarbamoyltransferase (343 aa).

Residues His120 and His124 each contribute to the Fe cation site. Substrate is bound by residues 142-146 (VVSGG), Asp175, Gly188, Asp192, and Asn281. Position 310 (Asp310) interacts with Fe cation.

Belongs to the KAE1 / TsaD family. It depends on Fe(2+) as a cofactor.

The protein localises to the cytoplasm. The catalysed reaction is L-threonylcarbamoyladenylate + adenosine(37) in tRNA = N(6)-L-threonylcarbamoyladenosine(37) in tRNA + AMP + H(+). Its function is as follows. Required for the formation of a threonylcarbamoyl group on adenosine at position 37 (t(6)A37) in tRNAs that read codons beginning with adenine. Is involved in the transfer of the threonylcarbamoyl moiety of threonylcarbamoyl-AMP (TC-AMP) to the N6 group of A37, together with TsaE and TsaB. TsaD likely plays a direct catalytic role in this reaction. This chain is tRNA N6-adenosine threonylcarbamoyltransferase, found in Bacillus cereus (strain ATCC 14579 / DSM 31 / CCUG 7414 / JCM 2152 / NBRC 15305 / NCIMB 9373 / NCTC 2599 / NRRL B-3711).